Reading from the N-terminus, the 610-residue chain is MSDQFDAKAFLKTVTSQPGVYRMYDAGGTVIYVGKAKDLKKRLSSYFRSNLASRKTEALVAQIQQIDVTVTHTETEALLLEHNYIKLYQPRYNVLLRDDKSYPFIFLSGDTHPRLAMHRGAKHAKGEYFGPFPNGYAVRETLALLQKIFPIRQCENSVYRNRSRPCLQYQIGRCLGPCVEGLVSEEEYAQQVEYVRLFLSGKDDQVLTQLISRMETASQNLEFEEAARIRDQIQAVRRVTEKQFVSNTGDDLDVIGVAFDAGMACVHVLFIRQGKVLGSRSYFPKVPGGTELSEVVETFVGQFYLQGSQMRTLPGEILLDFNLSDKTLLADSLSELAGRKINVQTKPRGDRARYLKLARTNAATALTSKLSQQSTVHQRLTALASVLKLPEVKRMECFDISHTMGEQTVASCVVFDANGPLRAEYRRYNITGITPGDDYAAMNQVLRRRYGKAIDDSKIPDVILIDGGKGQLAQAKNVFAELDVSWDKNHPLLLGVAKGADRKAGLETLFFEPEGEGFSLPPDSPALHVIQHIRDESHDHAIGGHRKKRAKVKNTSSLETIEGVGPKRRQMLLKYMGGLQGLRNASVEEIAKVPGISQGLAEKIFWSLKH.

Positions 16 to 94 constitute a GIY-YIG domain; the sequence is SQPGVYRMYD…IKLYQPRYNV (79 aa). In terms of domain architecture, UVR spans 204-239; it reads DQVLTQLISRMETASQNLEFEEAARIRDQIQAVRRV.

The protein belongs to the UvrC family. In terms of assembly, interacts with UvrB in an incision complex.

It localises to the cytoplasm. The UvrABC repair system catalyzes the recognition and processing of DNA lesions. UvrC both incises the 5' and 3' sides of the lesion. The N-terminal half is responsible for the 3' incision and the C-terminal half is responsible for the 5' incision. The chain is UvrABC system protein C from Escherichia coli O139:H28 (strain E24377A / ETEC).